Reading from the N-terminus, the 502-residue chain is Cobyric acid synthase (502 aa).

In terms of domain architecture, GATase cobBQ-type spans 260–433; the sequence is ILRVAVCAIP…WHGSLESDGF (174 aa). Cysteine 341 functions as the Nucleophile in the catalytic mechanism. The active site involves histidine 425.

This sequence belongs to the CobB/CobQ family. CobQ subfamily.

It functions in the pathway cofactor biosynthesis; adenosylcobalamin biosynthesis. In terms of biological role, catalyzes amidations at positions B, D, E, and G on adenosylcobyrinic A,C-diamide. NH(2) groups are provided by glutamine, and one molecule of ATP is hydrogenolyzed for each amidation. In Streptomyces avermitilis (strain ATCC 31267 / DSM 46492 / JCM 5070 / NBRC 14893 / NCIMB 12804 / NRRL 8165 / MA-4680), this protein is Cobyric acid synthase.